We begin with the raw amino-acid sequence, 188 residues long: Large ribosomal subunit protein eL18 (188 aa).

K119 is covalently cross-linked (Glycyl lysine isopeptide (Lys-Gly) (interchain with G-Cter in SUMO2)). S130 bears the Phosphoserine mark. Residues R150–N188 are disordered. T158 carries the phosphothreonine modification. 2 stretches are compositionally biased toward basic residues: residues S161–G171 and R178–N188. A Glycyl lysine isopeptide (Lys-Gly) (interchain with G-Cter in SUMO2) cross-link involves residue K164.

The protein belongs to the eukaryotic ribosomal protein eL18 family. Component of the large ribosomal subunit.

It localises to the cytoplasm. The protein localises to the cytosol. The protein resides in the rough endoplasmic reticulum. In terms of biological role, component of the large ribosomal subunit. The ribosome is a large ribonucleoprotein complex responsible for the synthesis of proteins in the cell. The polypeptide is Large ribosomal subunit protein eL18 (Rpl18) (Rattus norvegicus (Rat)).